The following is a 411-amino-acid chain: Multidrug resistance protein MdtH (411 aa).

11 helical membrane-spanning segments follow: residues 13–33 (YFLL…FPLI), 45–65 (ALLV…LGIF), 73–95 (LGAK…FMGI), 99–116 (PWLL…GTLF), 139–159 (LLMI…SWLL), 165–185 (LVCL…AWLL), 213–233 (YVFT…ILPI), 243–263 (AAVR…LYPI), 288–308 (IIPI…GIFY), 340–360 (LGLA…YDMG), and 365–385 (IPQL…LGFY).

Belongs to the major facilitator superfamily. DHA1 family. MdtH (TC 2.A.1.2.21) subfamily.

The protein resides in the cell membrane. The chain is Multidrug resistance protein MdtH from Baumannia cicadellinicola subsp. Homalodisca coagulata.